Here is a 222-residue protein sequence, read N- to C-terminus: Coiled-coil domain-containing protein 70 (222 aa).

2 coiled-coil regions span residues 34–62 (LQEE…WNFR) and 129–188 (NALW…KAAW).

This is Coiled-coil domain-containing protein 70 (CCDC70) from Bos taurus (Bovine).